The sequence spans 288 residues: 4-diphosphocytidyl-2-C-methyl-D-erythritol kinase (288 aa).

K8 is an active-site residue. 90–100 serves as a coordination point for ATP; the sequence is PVGAGLAGGSS. Residue D132 is part of the active site.

The protein belongs to the GHMP kinase family. IspE subfamily.

It carries out the reaction 4-CDP-2-C-methyl-D-erythritol + ATP = 4-CDP-2-C-methyl-D-erythritol 2-phosphate + ADP + H(+). It functions in the pathway isoprenoid biosynthesis; isopentenyl diphosphate biosynthesis via DXP pathway; isopentenyl diphosphate from 1-deoxy-D-xylulose 5-phosphate: step 3/6. Catalyzes the phosphorylation of the position 2 hydroxy group of 4-diphosphocytidyl-2C-methyl-D-erythritol. This is 4-diphosphocytidyl-2-C-methyl-D-erythritol kinase from Chlamydia trachomatis serovar D (strain ATCC VR-885 / DSM 19411 / UW-3/Cx).